Consider the following 387-residue polypeptide: [LysW]-aminoadipate semialdehyde/glutamate semialdehyde transaminase (387 aa).

Pyridoxal 5'-phosphate is bound by residues 96–97 (GT) and Phe-123. Arg-126 provides a ligand contact to substrate. 207–210 (DEVQ) contacts pyridoxal 5'-phosphate. Lys-236 carries the N6-(pyridoxal phosphate)lysine modification. Ser-264 contributes to the substrate binding site. Thr-265 provides a ligand contact to pyridoxal 5'-phosphate.

This sequence belongs to the class-III pyridoxal-phosphate-dependent aminotransferase family. LysJ subfamily. In terms of assembly, homodimer. Pyridoxal 5'-phosphate is required as a cofactor.

It localises to the cytoplasm. It catalyses the reaction [amino-group carrier protein]-C-terminal-gamma-(L-lysyl)-L-glutamate + 2-oxoglutarate = [amino-group carrier protein]-C-terminal-N-(1-carboxy-5-oxopentan-1-yl)-L-glutamine + L-glutamate. The enzyme catalyses [amino-group carrier protein]-C-terminal-gamma-(L-ornithyl)-L-glutamate + 2-oxoglutarate = [amino-group carrier protein]-C-terminal-gamma-(L-glutamyl-5-semialdehyde)-L-glutamate + L-glutamate. It functions in the pathway amino-acid biosynthesis; L-lysine biosynthesis via AAA pathway; L-lysine from L-alpha-aminoadipate (Thermus route): step 4/5. Its pathway is amino-acid biosynthesis; L-arginine biosynthesis. In terms of biological role, involved in both the arginine and lysine biosynthetic pathways. This chain is [LysW]-aminoadipate semialdehyde/glutamate semialdehyde transaminase, found in Sulfurisphaera tokodaii (strain DSM 16993 / JCM 10545 / NBRC 100140 / 7) (Sulfolobus tokodaii).